The sequence spans 88 residues: Small ribosomal subunit protein bS20 (88 aa).

The interval 1 to 21 (MANTTSAKKATRKIARRTAVN) is disordered.

This sequence belongs to the bacterial ribosomal protein bS20 family.

Functionally, binds directly to 16S ribosomal RNA. The chain is Small ribosomal subunit protein bS20 from Agrobacterium fabrum (strain C58 / ATCC 33970) (Agrobacterium tumefaciens (strain C58)).